The primary structure comprises 680 residues: MLTHKTCQARKKMQVSFVIRDAEEKQHRNGVNALQLDANNGKLYSAGRDAIIRVWNTRTDSSEKYIQSMEHHNDWVNDIVLCCNGRNLISASCDTTVKVWNAQKGFCMSTLRTHRDYVQALAYAKDREQVASAGLDKAIFLWDVNTLTALTASNNTVTTSSLTGSKDSIYSLAMNPSGTVIVSGSTENILRIWDPRTCMRSMKLRGHTENVRCLVVSPDGNQVVSGSSDGTIKVWNLGQQRCVQTIHVHKEGVWSLLMSENFQYIVSGSRDRNIIVTEMRNPSNKTLVCEEQAPVLSLGYNIDKTGVWATTWNSDIRCWKLPMYDRCTMNSSGGMDAQWTQGGTEVACIKGGAAIKECAVLNDKRYIITKDSQDQVVVYDVLRVVKKEQLGAVDYEAEVKKRNKQVYIPNWFTVDLKTGMPTIVLGQEEVDCFSAWVSIEAGLPECVDPTTEIKINYGKLLLEALLEYWTPPHSIPPNEMEPDMHGNGYFQVPKHTPVIFSEVGGRTVCRLLVRDAAGDSESTLLHETAPQWVTDVVIEKNIPKFLKIPFFLQPHPQMTKPERTKKDRLVANEFIQCRKVCEHVLEKVLNAETTPSGGNANNSLQNSQSDANSEGSQLPAEERIELWCNDVVVDPNMDLRTVRHFIWKQSTDLTFQYKTKQNFNYDGSIGDSLERVTRKY.

WD repeat units lie at residues 26–65, 71–110, 113–152, 164–203, 206–245, 248–287, 290–329, and 350–389; these read QHRN…SEKY, HHND…CMST, THRD…ALTA, GSKD…RSMK, GHTE…CVQT, VHKE…NKTL, EEQA…RCTM, and KGGA…KKEQ. The disordered stretch occupies residues 592–616; sequence ETTPSGGNANNSLQNSQSDANSEGS.

This sequence belongs to the WD repeat WDR48 family. Catalytic component of the Usp12-46 deubiquitylase complex consisting of Usp12-46, Wdr20 and Uaf1; regulatory subunit that, together wtih Wdr20, stabilizes Usp12-46. The Usp12-46 deubiquitylase complex associates with arr/arrow; the interaction leads to deubiquitination and stabilization of arr/arrow.

Its function is as follows. Regulatory component of the Usp12-46 deubiquitylase complex. activates deubiquitination by increasing the catalytic turnover without increasing the affinity of deubiquitinating enzymes for the substrate. The complex deubiquitylates the wg/wingless-signaling receptor arr/arrow, which stabilizes the receptor and increases its concentration at the cell surface; this enhances the sensitivity of cells to wg/wingless-signal stimulation. This increases the amplitude and spatial range of the signaling response to the wg/wingless morphogen gradient, facilitating the precise concentration-dependent regulation of its target genes. Together with Wdr20 and Usp12-46 required for wg/wingless-mediated signaling in the wing imaginal disc and for wg/wingless-dependent regulation of intestinal stem cell proliferation. The polypeptide is WD repeat-containing protein 48 homolog (Drosophila yakuba (Fruit fly)).